The following is a 579-amino-acid chain: UPF0329 protein ECU06_1620 (579 aa).

Disordered stretches follow at residues 325–360 (EEKA…GEEA) and 370–389 (ARRK…KIHK). Over residues 329-338 (KGRKDGKKKS) the composition is skewed to basic residues. The segment covering 345 to 360 (KEEESETEEVEAGEEA) has biased composition (acidic residues).

The protein belongs to the UPF0329 family.

This Encephalitozoon cuniculi (strain GB-M1) (Microsporidian parasite) protein is UPF0329 protein ECU06_1620.